We begin with the raw amino-acid sequence, 1061 residues long: Atrial natriuretic peptide receptor 1 (1061 aa).

Residues Met-1–Ala-32 form the signal peptide. The Extracellular segment spans residues Gly-33–Glu-473. Asn-34 and Asn-45 each carry an N-linked (GlcNAc...) asparagine glycan. Positions 85, 117, and 118 each coordinate chloride. Intrachain disulfides connect Cys-92–Cys-118 and Cys-196–Cys-245. N-linked (GlcNAc...) asparagine glycosylation is found at Asn-212, Asn-338, Asn-379, Asn-386, and Asn-427. Cys-455 and Cys-464 are disulfide-bonded. Residues Val-474–Tyr-494 form a helical membrane-spanning segment. The Cytoplasmic segment spans residues Arg-495–Gly-1061. Ser-519 and Ser-529 each carry phosphoserine. A Protein kinase domain is found at Gly-528–Asn-805. Thr-532 carries the post-translational modification Phosphothreonine. Phosphoserine occurs at positions 534, 538, and 542. Thr-545 is modified (phosphothreonine). Positions Thr-876–Glu-1006 constitute a Guanylate cyclase domain.

This sequence belongs to the adenylyl cyclase class-4/guanylyl cyclase family. In terms of assembly, homodimer. In terms of processing, phosphorylation of the protein kinase-like domain is required for full activation by ANP.

It is found in the membrane. It carries out the reaction GTP = 3',5'-cyclic GMP + diphosphate. In terms of biological role, receptor for the atrial natriuretic peptide NPPA/ANP and the brain natriuretic peptide NPPB/BNP which are potent vasoactive hormones playing a key role in cardiovascular homeostasis. Plays an essential role in the regulation of endothelial cell senescence and vascular aging. Upon activation by ANP or BNP, stimulates the production of cyclic guanosine monophosphate (cGMP) that promotes vascular tone and volume homeostasis by activation of protein kinase cGMP-dependent 1/PRKG1 and subsequently PRKAA1, thereby controlling blood pressure and maintaining cardiovascular homeostasis. The chain is Atrial natriuretic peptide receptor 1 from Homo sapiens (Human).